Consider the following 618-residue polypeptide: F-box/LRR-repeat protein At3g58940 (618 aa).

The region spanning 1–47 is the F-box domain; it reads MDRVSNLPEEVRCHILSFLPTKHAALTSVLSKSWLNLWKFETNLDID. 6 LRR repeats span residues 147-176, 196-223, 224-249, 282-313, 314-339, and 354-379; these read LKLRSEHCVNWWHWDIGASLPNLKSLNIDS, EVHMANMEWRELDETMSSASLTKLSIHG, TGVEEFEHPKSISIDTPNLLYLNYSD, TLYLTEDTLEVLTMCCESMPVFNNLKTLGLKS, DEGRGWQAVPALLRNCPHLEFLIIEG, and CISREDKGRSLISCPVKKLEVRGFRG. The segment at 587–618 is disordered; it reads ATDSERAETSSNQEMTELGQATATYFPPREGE. The span at 595-609 shows a compositional bias: polar residues; it reads TSSNQEMTELGQATA.

The protein is F-box/LRR-repeat protein At3g58940 of Arabidopsis thaliana (Mouse-ear cress).